A 118-amino-acid polypeptide reads, in one-letter code: Large ribosomal subunit protein uL18 (118 aa).

Positions 1–22 (MISKPDKNKLRQKRHRRVRGKL) are disordered. Basic residues predominate over residues 10-20 (LRQKRHRRVRG).

This sequence belongs to the universal ribosomal protein uL18 family. Part of the 50S ribosomal subunit; part of the 5S rRNA/L5/L18/L25 subcomplex. Contacts the 5S and 23S rRNAs.

Functionally, this is one of the proteins that bind and probably mediate the attachment of the 5S RNA into the large ribosomal subunit, where it forms part of the central protuberance. In Streptococcus thermophilus (strain ATCC BAA-491 / LMD-9), this protein is Large ribosomal subunit protein uL18.